The primary structure comprises 289 residues: Energy-coupling factor transporter ATP-binding protein EcfA2 (289 aa).

The 244-residue stretch at 3–246 (IRFKQVDFTY…TQWLKEKQLG (244 aa)) folds into the ABC transporter domain. Residue 40-47 (GHTGSGKS) coordinates ATP.

It belongs to the ABC transporter superfamily. Energy-coupling factor EcfA family. As to quaternary structure, forms a stable energy-coupling factor (ECF) transporter complex composed of 2 membrane-embedded substrate-binding proteins (S component), 2 ATP-binding proteins (A component) and 2 transmembrane proteins (T component).

The protein localises to the cell membrane. ATP-binding (A) component of a common energy-coupling factor (ECF) ABC-transporter complex. Unlike classic ABC transporters this ECF transporter provides the energy necessary to transport a number of different substrates. The sequence is that of Energy-coupling factor transporter ATP-binding protein EcfA2 from Enterococcus faecalis (strain ATCC 700802 / V583).